The sequence spans 254 residues: Ribonuclease HII (254 aa).

One can recognise an RNase H type-2 domain in the interval 70–254 (QAIAGIDEVG…TFEPIKSMYE (185 aa)). A divalent metal cation contacts are provided by Asp76, Glu77, and Asp168.

Belongs to the RNase HII family. Mn(2+) is required as a cofactor. Mg(2+) serves as cofactor.

Its subcellular location is the cytoplasm. The enzyme catalyses Endonucleolytic cleavage to 5'-phosphomonoester.. In terms of biological role, endonuclease that specifically degrades the RNA of RNA-DNA hybrids. This chain is Ribonuclease HII, found in Streptococcus sanguinis (strain SK36).